The primary structure comprises 230 residues: Probable C4-dicarboxylate response regulator DctR (230 aa).

Residues 8–124 (RVLLIEDDPM…RLKAALTQYE (117 aa)) form the Response regulatory domain. Asp59 carries the post-translational modification 4-aspartylphosphate. A DNA-binding region (H-T-H motif) is located at residues 183–209 (EEIGRDVGLARVTVRRYLNYLESVGQV).

In terms of processing, phosphorylated by DctS.

The protein localises to the cytoplasm. Member of the two-component regulatory system DctS/DctR. Essential for expression of DctP. This Halalkalibacterium halodurans (strain ATCC BAA-125 / DSM 18197 / FERM 7344 / JCM 9153 / C-125) (Bacillus halodurans) protein is Probable C4-dicarboxylate response regulator DctR (dctR).